The sequence spans 191 residues: Inosine triphosphate pyrophosphatase (191 aa).

ITP is bound at residue 15 to 20 (TGNANK). Glu-43 lines the Mg(2+) pocket. ITP-binding positions include Lys-55, 71–72 (DT), Lys-88, 147–150 (FGWD), Lys-168, and 173–174 (HR).

It belongs to the HAM1 NTPase family. In terms of assembly, homodimer. The cofactor is Mg(2+). Mn(2+) is required as a cofactor.

It is found in the cytoplasm. It localises to the nucleus. It carries out the reaction ITP + H2O = IMP + diphosphate + H(+). The enzyme catalyses dITP + H2O = dIMP + diphosphate + H(+). The catalysed reaction is XTP + H2O = XMP + diphosphate + H(+). Functionally, pyrophosphatase that hydrolyzes non-canonical purine nucleotides such as inosine triphosphate (ITP), deoxyinosine triphosphate (dITP) or xanthosine 5'-triphosphate (XTP) to their respective monophosphate derivatives. The enzyme does not distinguish between the deoxy- and ribose forms. Probably excludes non-canonical purines from RNA and DNA precursor pools, thus preventing their incorporation into RNA and DNA and avoiding chromosomal lesions. The sequence is that of Inosine triphosphate pyrophosphatase from Neurospora crassa (strain ATCC 24698 / 74-OR23-1A / CBS 708.71 / DSM 1257 / FGSC 987).